Consider the following 194-residue polypeptide: Protein GrpE (194 aa).

The protein belongs to the GrpE family. Homodimer.

The protein localises to the cytoplasm. Its function is as follows. Participates actively in the response to hyperosmotic and heat shock by preventing the aggregation of stress-denatured proteins, in association with DnaK and GrpE. It is the nucleotide exchange factor for DnaK and may function as a thermosensor. Unfolded proteins bind initially to DnaJ; upon interaction with the DnaJ-bound protein, DnaK hydrolyzes its bound ATP, resulting in the formation of a stable complex. GrpE releases ADP from DnaK; ATP binding to DnaK triggers the release of the substrate protein, thus completing the reaction cycle. Several rounds of ATP-dependent interactions between DnaJ, DnaK and GrpE are required for fully efficient folding. The chain is Protein GrpE from Aliivibrio fischeri (strain MJ11) (Vibrio fischeri).